We begin with the raw amino-acid sequence, 199 residues long: Nucleoside triphosphate pyrophosphatase (199 aa).

D76 functions as the Proton acceptor in the catalytic mechanism.

It belongs to the Maf family. It depends on a divalent metal cation as a cofactor.

It localises to the cytoplasm. It carries out the reaction a ribonucleoside 5'-triphosphate + H2O = a ribonucleoside 5'-phosphate + diphosphate + H(+). It catalyses the reaction a 2'-deoxyribonucleoside 5'-triphosphate + H2O = a 2'-deoxyribonucleoside 5'-phosphate + diphosphate + H(+). Its function is as follows. Nucleoside triphosphate pyrophosphatase. May have a dual role in cell division arrest and in preventing the incorporation of modified nucleotides into cellular nucleic acids. This chain is Nucleoside triphosphate pyrophosphatase, found in Ruegeria sp. (strain TM1040) (Silicibacter sp.).